We begin with the raw amino-acid sequence, 544 residues long: Ceramide glucosyltransferase (544 aa).

Residues 1-15 lie on the Lumenal side of the membrane; that stretch reads MVQEELSLFRITTGY. Residues 16–36 form a helical membrane-spanning segment; sequence FFLLWYIIILVAAYSGFFEIL. Residues 37-427 lie on the Cytoplasmic side of the membrane; sequence FNFRNRPILH…LATLIEPTTE (391 aa). Position 109 (D109) is a short sequence motif, D1. Residue D171 is a short sequence motif, D2. D364 is a short sequence motif (D3). D364 (proton acceptor) is an active-site residue. The (Q/R)XXRW signature appears at 404 to 408; sequence RRVRW. Residues 428–448 form a helical membrane-spanning segment; that stretch reads SIICGIYGTYAISTVFFGTWF. Residues 449–451 are Lumenal-facing; sequence NKY. Residues 452-472 form a helical membrane-spanning segment; that stretch reads WFVMHMLIWMLTDYVQYHTLI. The Cytoplasmic portion of the chain corresponds to 473 to 501; that stretch reads NHTLDVKNITYLPNWLNESIPPKQRNCLQ. Residues 502–522 traverse the membrane as a helical segment; sequence WGYIWILRELLALPIWIIAMI. The Lumenal segment spans residues 523-544; sequence GHEIDWRGRPFRIKKDLTAEEM.

This sequence belongs to the glycosyltransferase 2 family.

It is found in the golgi apparatus membrane. It catalyses the reaction an N-acylsphing-4-enine + UDP-alpha-D-glucose = a beta-D-glucosyl-(1&lt;-&gt;1')-N-acylsphing-4-enine + UDP + H(+). It functions in the pathway lipid metabolism; sphingolipid metabolism. Catalyzes the final step in the biosynthesis of the membrane lipid glucosylceramide (GluCer), the transfer of glucose to ceramide. Glucosylceramides play important roles in growth, differentiation and pathogenicity. The chain is Ceramide glucosyltransferase from Candida albicans (strain SC5314 / ATCC MYA-2876) (Yeast).